The following is a 268-amino-acid chain: LOB domain-containing protein 22 (268 aa).

A disordered region spans residues 1 to 31; that stretch reads MPSGKPSSVFPLHPKPTPLKPSSSTSSSNNN. Over residues 22 to 31 the composition is skewed to low complexity; the sequence is SSSTSSSNNN. In terms of domain architecture, LOB spans 35–136; sequence QACAACKYQR…NELEIVLQQL (102 aa).

Belongs to the LOB domain-containing protein family.

In Arabidopsis thaliana (Mouse-ear cress), this protein is LOB domain-containing protein 22 (LBD22).